The primary structure comprises 265 residues: 5'-nucleotidase SurE (265 aa).

A divalent metal cation-binding residues include Asp-8, Asp-9, Ser-40, and Asn-98.

This sequence belongs to the SurE nucleotidase family. A divalent metal cation is required as a cofactor.

It is found in the cytoplasm. The enzyme catalyses a ribonucleoside 5'-phosphate + H2O = a ribonucleoside + phosphate. In terms of biological role, nucleotidase that shows phosphatase activity on nucleoside 5'-monophosphates. The sequence is that of 5'-nucleotidase SurE from Thermosynechococcus vestitus (strain NIES-2133 / IAM M-273 / BP-1).